Here is a 204-residue protein sequence, read N- to C-terminus: DNA-directed RNA polymerase subunit gamma (204 aa).

4 residues coordinate Zn(2+): Cys-34, Cys-36, Cys-49, and Cys-52.

Belongs to the RNA polymerase beta' chain family. RpoC1 subfamily. In cyanobacteria the RNAP catalytic core is composed of 2 alpha, 1 beta, 1 beta', 1 gamma and 1 omega subunit. When a sigma factor is associated with the core the holoenzyme is formed, which can initiate transcription. The cofactor is Zn(2+).

It catalyses the reaction RNA(n) + a ribonucleoside 5'-triphosphate = RNA(n+1) + diphosphate. Functionally, DNA-dependent RNA polymerase catalyzes the transcription of DNA into RNA using the four ribonucleoside triphosphates as substrates. This is DNA-directed RNA polymerase subunit gamma (rpoC1) from Synechococcus sp. (strain WH8103).